The sequence spans 634 residues: Chaperone protein HtpG (634 aa).

The a; substrate-binding stretch occupies residues 1–342; sequence MTVETDKQTL…SSDLSLNVSR (342 aa). A b region spans residues 343–559; sequence EILQSGPVVD…QGDLGLQMRQ (217 aa). The c stretch occupies residues 560 to 634; it reads LLEASGQAVP…LNKLLLELSA (75 aa).

It belongs to the heat shock protein 90 family. As to quaternary structure, homodimer.

It is found in the cytoplasm. Functionally, molecular chaperone. Has ATPase activity. This chain is Chaperone protein HtpG, found in Xanthomonas axonopodis pv. citri (strain 306).